A 180-amino-acid chain; its full sequence is Small ribosomal subunit protein uS4 (180 aa).

The S4 RNA-binding domain occupies 103-165 (RRLQTIVYRK…KGSPFAKEGH (63 aa)).

It belongs to the universal ribosomal protein uS4 family. As to quaternary structure, part of the 30S ribosomal subunit. Contacts protein S5. The interaction surface between S4 and S5 is involved in control of translational fidelity.

One of the primary rRNA binding proteins, it binds directly to 16S rRNA where it nucleates assembly of the body of the 30S subunit. Its function is as follows. With S5 and S12 plays an important role in translational accuracy. This Thermococcus kodakarensis (strain ATCC BAA-918 / JCM 12380 / KOD1) (Pyrococcus kodakaraensis (strain KOD1)) protein is Small ribosomal subunit protein uS4.